The chain runs to 206 residues: MSNVRSKICGITRIEDALAAAEAGADAIGFVFYAKSPRAVDVRQARAIMAELPPFVTTVGLFVNASRCELNEILEAVPLDLLQFHGDETPADCEGYHRPWIKALRVRPGDDLEAACRHYAGARGILLDTYVAGVPGGTGEAFDWSLVPSRLSKPIILAGGLSAGNVGQAIAQVRPYAVDVSGGVEQAKGIKDAAKIEAFMRAVKQA.

This sequence belongs to the TrpF family.

It catalyses the reaction N-(5-phospho-beta-D-ribosyl)anthranilate = 1-(2-carboxyphenylamino)-1-deoxy-D-ribulose 5-phosphate. Its pathway is amino-acid biosynthesis; L-tryptophan biosynthesis; L-tryptophan from chorismate: step 3/5. In Pseudomonas putida (strain W619), this protein is N-(5'-phosphoribosyl)anthranilate isomerase.